The following is a 684-amino-acid chain: Zinc finger BED domain-containing protein RICESLEEPER 4 (684 aa).

A BED-type zinc finger spans residues 54-113 (KRKSAIWEHFTLVDVSDGCKRASCIHCNQSLAYSSGSKNSGTSHLTRHIAEWCRVLKDRQ). Positions 77, 80, 101, and 106 each coordinate Zn(2+). The interval 595-680 (ELELYLEEAL…EALLCAKDWL (86 aa)) is HATC (Hobo-Ac-Tam3) domain.

Homodimer.

It localises to the nucleus. Functionally, transposase-like protein that is essential for plant growth and development. May regulate global gene expression by recruiting other cellular factors. The polypeptide is Zinc finger BED domain-containing protein RICESLEEPER 4 (Oryza sativa subsp. japonica (Rice)).